The sequence spans 165 residues: Small ribosomal subunit protein uS5 (165 aa).

The region spanning 10 to 73 (LKEKVVFINR…EDAKKNLVEV (64 aa)) is the S5 DRBM domain.

This sequence belongs to the universal ribosomal protein uS5 family. Part of the 30S ribosomal subunit. Contacts proteins S4 and S8.

Its function is as follows. With S4 and S12 plays an important role in translational accuracy. Functionally, located at the back of the 30S subunit body where it stabilizes the conformation of the head with respect to the body. The chain is Small ribosomal subunit protein uS5 from Clostridium acetobutylicum (strain ATCC 824 / DSM 792 / JCM 1419 / IAM 19013 / LMG 5710 / NBRC 13948 / NRRL B-527 / VKM B-1787 / 2291 / W).